The sequence spans 443 residues: Xaa-Pro dipeptidase (443 aa).

D246, D257, H339, E384, and E423 together coordinate Mn(2+).

The protein belongs to the peptidase M24B family. Bacterial-type prolidase subfamily. Mn(2+) is required as a cofactor.

It catalyses the reaction Xaa-L-Pro dipeptide + H2O = an L-alpha-amino acid + L-proline. Splits dipeptides with a prolyl residue in the C-terminal position. The polypeptide is Xaa-Pro dipeptidase (Cronobacter sakazakii (strain ATCC BAA-894) (Enterobacter sakazakii)).